The sequence spans 1464 residues: DNA-directed RNA polymerase subunit beta' (1464 aa).

Mg(2+)-binding residues include Asp541, Asp543, and Asp545. Residues Cys1022, Cys1098, Cys1105, and Cys1108 each contribute to the Zn(2+) site. The segment at 1435–1464 (LEDEQQQIIEVDDSDISVEDEENDFYENED) is disordered.

The protein belongs to the RNA polymerase beta' chain family. The RNAP catalytic core consists of 2 alpha, 1 beta, 1 beta' and 1 omega subunit. When a sigma factor is associated with the core the holoenzyme is formed, which can initiate transcription. The cofactor is Mg(2+). Zn(2+) serves as cofactor.

The catalysed reaction is RNA(n) + a ribonucleoside 5'-triphosphate = RNA(n+1) + diphosphate. Functionally, DNA-dependent RNA polymerase catalyzes the transcription of DNA into RNA using the four ribonucleoside triphosphates as substrates. The sequence is that of DNA-directed RNA polymerase subunit beta' from Metamycoplasma arthritidis (strain 158L3-1) (Mycoplasma arthritidis).